Here is a 466-residue protein sequence, read N- to C-terminus: MSNNTDLSPVHVIGGGLAGSEAAWQIAQAGVPVVLHEMRPVRGTDAHKTEQLAELVCSNSFRSDDAETNAVGVLHAEMRLAGSLIMACADAHQVPAGGALAVDREGFSQAVTARLEAHPLITIEREEITGLPPTEWGTTIIATGPLTAPSLAEAIAAETDADALAFFDAIAPIIHFDSINMDVCWFQSRYDKVGPGGTGKDYINCPMDKEQYEAFVAALIEGDKTDFKEWEGTPYFDGCLPIEVMAERGPETLRHGPMKPMGLTNAHNPTVKPYAVVQLRQDNALGTLYNMVGFQTKLKYGSQTGIFKMIPGLENAEFARLGGLHRNTYLNSPVLLDNVLRLKSRQTLRFAGQVTGCEGYVESSAIGLLAGRFTAAEKLSQAAVPPPPTTAFGALLGHITGGHIVTDDEPGKRSFQPMNVNFGLFPPVDVPKPEGKRLRGKEKTIAKKRALSARALADCRNWLSLY.

14–19 (GGGLAG) contacts FAD.

The protein belongs to the MnmG family. TrmFO subfamily. FAD is required as a cofactor.

It is found in the cytoplasm. The enzyme catalyses uridine(54) in tRNA + (6R)-5,10-methylene-5,6,7,8-tetrahydrofolate + NADH + H(+) = 5-methyluridine(54) in tRNA + (6S)-5,6,7,8-tetrahydrofolate + NAD(+). The catalysed reaction is uridine(54) in tRNA + (6R)-5,10-methylene-5,6,7,8-tetrahydrofolate + NADPH + H(+) = 5-methyluridine(54) in tRNA + (6S)-5,6,7,8-tetrahydrofolate + NADP(+). Catalyzes the folate-dependent formation of 5-methyl-uridine at position 54 (M-5-U54) in all tRNAs. The protein is Methylenetetrahydrofolate--tRNA-(uracil-5-)-methyltransferase TrmFO of Brucella melitensis biotype 1 (strain ATCC 23456 / CCUG 17765 / NCTC 10094 / 16M).